The sequence spans 298 residues: ADP-ribosyl cyclase/cyclic ADP-ribose hydrolase 1 (298 aa).

Over 1 to 21 the chain is Cytoplasmic; it reads MPDYEFSPASGDRPRSWISKQ. The chain crosses the membrane as a helical; Signal-anchor for type II membrane protein span at residues 22-42; sequence VLIVLGVCLPVILALAIWVGV. Residues 43–298 lie on the Extracellular side of the membrane; that stretch reads LTWRQSSMGA…PEHPSCSVLM (256 aa). 3 cysteine pairs are disulfide-bonded: cysteine 64/cysteine 80, cysteine 97/cysteine 178, and cysteine 158/cysteine 171. An N-linked (GlcNAc...) asparagine glycan is attached at asparagine 98. Cysteine 117 is an active-site residue. Residue asparagine 118 is glycosylated (N-linked (GlcNAc...) asparagine). A glycan (N-linked (GlcNAc...) asparagine) is linked at asparagine 177. Cysteine 199 is a catalytic residue. Residues asparagine 207 and asparagine 268 are each glycosylated (N-linked (GlcNAc...) asparagine). 2 disulfide bridges follow: cysteine 252/cysteine 273 and cysteine 285/cysteine 294.

It belongs to the ADP-ribosyl cyclase family. In terms of assembly, homodimer. In terms of tissue distribution, osteoclasts.

Its subcellular location is the cell membrane. The protein resides in the microsome membrane. It localises to the endoplasmic reticulum membrane. It catalyses the reaction NAD(+) = cyclic ADP-beta-D-ribose + nicotinamide + H(+). It carries out the reaction 2'-phospho-cyclic ADP-ribose + nicotinate = nicotinate-adenine dinucleotide phosphate. The catalysed reaction is NAD(+) + H2O = ADP-D-ribose + nicotinamide + H(+). The enzyme catalyses nicotinate + NADP(+) = nicotinate-adenine dinucleotide phosphate + nicotinamide. Synthesizes cyclic ADP-ribose (cADPR), a second messenger for glucose-induced insulin secretion. Synthesizes the Ca(2+) mobilizer nicotinate-adenine dinucleotide phosphate, NAADP(+), from 2'-phospho-cADPR and nicotinic acid, as well as from NADP(+) and nicotinic acid. Also has cADPR hydrolase activity. This chain is ADP-ribosyl cyclase/cyclic ADP-ribose hydrolase 1 (CD38), found in Oryctolagus cuniculus (Rabbit).